The primary structure comprises 662 residues: p-hydroxybenzoic acid efflux pump subunit AaeB (662 aa).

Helical transmembrane passes span 22 to 42 (FAFK…HLQL), 52 to 72 (AAIV…SGAI), 76 to 96 (GMLR…IIIA), 102 to 122 (VVML…SSLV), 129 to 149 (VFGL…GTPL), 161 to 181 (EIVL…PRSI), 378 to 398 (LFWL…IAVV), 415 to 435 (FLFG…FIMP), 439 to 459 (QSML…GLEV), 467 to 487 (LGAL…TFHI), and 491 to 511 (LDSA…ILLI).

Belongs to the aromatic acid exporter ArAE (TC 2.A.85) family.

It localises to the cell inner membrane. In terms of biological role, forms an efflux pump with AaeA. Could function as a metabolic relief valve, allowing to eliminate certain compounds when they accumulate to high levels in the cell. The polypeptide is p-hydroxybenzoic acid efflux pump subunit AaeB (Pectobacterium carotovorum subsp. carotovorum (strain PC1)).